A 168-amino-acid chain; its full sequence is Bifunctional protein PyrR (168 aa).

The short motif at Leu-90–Thr-102 is the PRPP-binding element.

The protein belongs to the purine/pyrimidine phosphoribosyltransferase family. PyrR subfamily.

It carries out the reaction UMP + diphosphate = 5-phospho-alpha-D-ribose 1-diphosphate + uracil. Regulates the transcription of the pyrimidine nucleotide (pyr) operon in response to exogenous pyrimidines. Functionally, also displays a weak uracil phosphoribosyltransferase activity which is not physiologically significant. The polypeptide is Bifunctional protein PyrR (Pseudomonas fluorescens (strain ATCC BAA-477 / NRRL B-23932 / Pf-5)).